Here is a 181-residue protein sequence, read N- to C-terminus: Large ribosomal subunit protein uL10 (181 aa).

Belongs to the universal ribosomal protein uL10 family. Part of the ribosomal stalk of the 50S ribosomal subunit. The N-terminus interacts with L11 and the large rRNA to form the base of the stalk. The C-terminus forms an elongated spine to which L12 dimers bind in a sequential fashion forming a multimeric L10(L12)X complex.

Forms part of the ribosomal stalk, playing a central role in the interaction of the ribosome with GTP-bound translation factors. The polypeptide is Large ribosomal subunit protein uL10 (Fervidobacterium nodosum (strain ATCC 35602 / DSM 5306 / Rt17-B1)).